Here is a 92-residue protein sequence, read N- to C-terminus: Putative pterin-4-alpha-carbinolamine dehydratase (92 aa).

It belongs to the pterin-4-alpha-carbinolamine dehydratase family.

The catalysed reaction is (4aS,6R)-4a-hydroxy-L-erythro-5,6,7,8-tetrahydrobiopterin = (6R)-L-erythro-6,7-dihydrobiopterin + H2O. The polypeptide is Putative pterin-4-alpha-carbinolamine dehydratase (Picosynechococcus sp. (strain ATCC 27264 / PCC 7002 / PR-6) (Agmenellum quadruplicatum)).